The sequence spans 206 residues: MPTPTKGARLGGSPAHERLLLANLATALFEHGGITTTEAKAKRLRPYAERLVTFAKRGDLHARRRVMRQVRDNSVVHTLFTEIGPRYANRNGGYTRIVKIGNRKGDNAPLARIELVEALTVGQQAVSEAERARGTRFEARRKPTGATVEAAEELAQESPTAAAVAVEAAEPAETPAEGAAGKPTTAQTDDSGIGDDSGAGEQNSAN.

Positions 130–141 (ERARGTRFEARR) are enriched in basic and acidic residues. Residues 130–206 (ERARGTRFEA…SGAGEQNSAN (77 aa)) are disordered. Low complexity-rich tracts occupy residues 160–181 (TAAAVAVEAAEPAETPAEGAAG) and 189–200 (DDSGIGDDSGAG).

The protein belongs to the bacterial ribosomal protein bL17 family. Part of the 50S ribosomal subunit. Contacts protein L32.

The chain is Large ribosomal subunit protein bL17 from Frankia casuarinae (strain DSM 45818 / CECT 9043 / HFP020203 / CcI3).